A 194-amino-acid polypeptide reads, in one-letter code: NADH-ubiquinone oxidoreductase subunit NUO2 (194 aa).

In terms of biological role, fungal-specific subunit of the mitochondrial membrane respiratory chain NADH dehydrogenase (Complex I). Complex I functions in the transfer of electrons from NADH to the respiratory chain. The immediate electron acceptor for the enzyme is believed to be ubiquinone. Plays a role in cell wall integrity and is involved in osmotic and oxidative resistance, yeast to hypha transition, and virulence via providing the ability to damage and invade host cells such as oral epithelial cells. The chain is NADH-ubiquinone oxidoreductase subunit NUO2 from Candida albicans (strain SC5314 / ATCC MYA-2876) (Yeast).